A 181-amino-acid chain; its full sequence is uncharacterized protein (181 aa).

To M.pneumoniae MPN_635 C-terminal region.

This is an uncharacterized protein from Mycoplasma pneumoniae (strain ATCC 29342 / M129 / Subtype 1) (Mycoplasmoides pneumoniae).